The chain runs to 241 residues: Ribonuclease PH (241 aa).

Phosphate contacts are provided by residues arginine 86 and 124 to 126 (GTR).

This sequence belongs to the RNase PH family. As to quaternary structure, homohexameric ring arranged as a trimer of dimers.

It carries out the reaction tRNA(n+1) + phosphate = tRNA(n) + a ribonucleoside 5'-diphosphate. In terms of biological role, phosphorolytic 3'-5' exoribonuclease that plays an important role in tRNA 3'-end maturation. Removes nucleotide residues following the 3'-CCA terminus of tRNAs; can also add nucleotides to the ends of RNA molecules by using nucleoside diphosphates as substrates, but this may not be physiologically important. Probably plays a role in initiation of 16S rRNA degradation (leading to ribosome degradation) during starvation. The protein is Ribonuclease PH of Hamiltonella defensa subsp. Acyrthosiphon pisum (strain 5AT).